The primary structure comprises 254 residues: Thiazole synthase (254 aa).

The active-site Schiff-base intermediate with DXP is the lysine 93. 1-deoxy-D-xylulose 5-phosphate is bound by residues glycine 154, alanine 181–glycine 182, and asparagine 203–threonine 204.

This sequence belongs to the ThiG family. Homotetramer. Forms heterodimers with either ThiH or ThiS.

It localises to the cytoplasm. It carries out the reaction [ThiS sulfur-carrier protein]-C-terminal-Gly-aminoethanethioate + 2-iminoacetate + 1-deoxy-D-xylulose 5-phosphate = [ThiS sulfur-carrier protein]-C-terminal Gly-Gly + 2-[(2R,5Z)-2-carboxy-4-methylthiazol-5(2H)-ylidene]ethyl phosphate + 2 H2O + H(+). It participates in cofactor biosynthesis; thiamine diphosphate biosynthesis. Its function is as follows. Catalyzes the rearrangement of 1-deoxy-D-xylulose 5-phosphate (DXP) to produce the thiazole phosphate moiety of thiamine. Sulfur is provided by the thiocarboxylate moiety of the carrier protein ThiS. In vitro, sulfur can be provided by H(2)S. The protein is Thiazole synthase of Ruegeria pomeroyi (strain ATCC 700808 / DSM 15171 / DSS-3) (Silicibacter pomeroyi).